A 130-amino-acid chain; its full sequence is Ribonuclease P protein component (130 aa).

This sequence belongs to the RnpA family. As to quaternary structure, consists of a catalytic RNA component (M1 or rnpB) and a protein subunit.

It catalyses the reaction Endonucleolytic cleavage of RNA, removing 5'-extranucleotides from tRNA precursor.. RNaseP catalyzes the removal of the 5'-leader sequence from pre-tRNA to produce the mature 5'-terminus. It can also cleave other RNA substrates such as 4.5S RNA. The protein component plays an auxiliary but essential role in vivo by binding to the 5'-leader sequence and broadening the substrate specificity of the ribozyme. The protein is Ribonuclease P protein component of Psychrobacter sp. (strain PRwf-1).